The chain runs to 180 residues: V-type proton ATPase subunit c''1 (180 aa).

The Lumenal portion of the chain corresponds to 1-26 (MSGVVALGHASSWGAALVRISPYTFS). The chain crosses the membrane as a helical span at residues 27-47 (AIGIAISIGVSVLGAAWGIYI). Residues 48 to 66 (TGSSLIGAAIEAPRITSKN) are Cytoplasmic-facing. The helical transmembrane segment at 67–87 (LISVIFCEAVAIYGVIVAIIL) threads the bilayer. Over 88-110 (QTKLESVPSSKMYDAESLRAGYA) the chain is Lumenal. A helical transmembrane segment spans residues 111-131 (IFASGIIVGFANLVCGLCVGI). The Cytoplasmic portion of the chain corresponds to 132–149 (IGSSCALSDAQNSTLFVK). The helical transmembrane segment at 150–170 (ILVIEIFGSALGLFGVIVGII) threads the bilayer. At 171-180 (MSAQATWPTK) the chain is on the lumenal side.

It belongs to the V-ATPase proteolipid subunit family. As to quaternary structure, V-ATPase is a heteromultimeric enzyme composed of a peripheral catalytic V1 complex (components A to H) attached to an integral membrane V0 proton pore complex (components: a, c, c'', d and e). The proteolipid components c and c'' are present as a hexameric ring that forms the proton-conducting pore. As to expression, preferentially expressed in roots.

It localises to the endoplasmic reticulum membrane. Its subcellular location is the golgi apparatus membrane. Its function is as follows. Proton-conducting pore forming subunit of the membrane integral V0 complex of vacuolar ATPase. V-ATPase is responsible for acidifying a variety of intracellular compartments in eukaryotic cells. The protein is V-type proton ATPase subunit c''1 (VHA-c''1) of Arabidopsis thaliana (Mouse-ear cress).